The primary structure comprises 293 residues: Pantothenate synthetase (293 aa).

Residue 30 to 37 participates in ATP binding; the sequence is MGNLHEGH. His37 serves as the catalytic Proton donor. Gln61 serves as a coordination point for (R)-pantoate. Gln61 contacts beta-alanine. ATP is bound at residue 149-152; the sequence is GEKD. Gln155 provides a ligand contact to (R)-pantoate. ATP contacts are provided by residues Val178 and 186 to 189; that span reads MSSR.

The protein belongs to the pantothenate synthetase family. In terms of assembly, homodimer.

The protein resides in the cytoplasm. It catalyses the reaction (R)-pantoate + beta-alanine + ATP = (R)-pantothenate + AMP + diphosphate + H(+). It participates in cofactor biosynthesis; (R)-pantothenate biosynthesis; (R)-pantothenate from (R)-pantoate and beta-alanine: step 1/1. In terms of biological role, catalyzes the condensation of pantoate with beta-alanine in an ATP-dependent reaction via a pantoyl-adenylate intermediate. The polypeptide is Pantothenate synthetase (Vibrio cholerae serotype O1 (strain ATCC 39541 / Classical Ogawa 395 / O395)).